Consider the following 404-residue polypeptide: Lupus La protein homolog (404 aa).

Positions 7-99 (NEKMAALEAK…RRSPSKPLPE (93 aa)) constitute an HTH La-type RNA-binding domain. 2 positions are modified to phosphoserine: Ser-92 and Ser-94. Residues 111-187 (RSVYIKGFPT…TDLLILFKED (77 aa)) enclose the RRM domain. At Lys-116 the chain carries N6-acetyllysine. Thr-120 is modified (phosphothreonine). An N6-acetyllysine modification is found at Lys-128. Residue Ser-225 is modified to Phosphoserine. The region spanning 227 to 348 (EEKIGCLLKF…KGKGNKAAQA (122 aa)) is the xRRM domain. N6-acetyllysine is present on residues Lys-328 and Lys-341. Residues 329-342 (WKSKGRRFKGKGKG) show a composition bias toward basic residues. Residues 329-404 (WKSKGRRFKG…QKTENGAGDQ (76 aa)) form a disordered region. Residues 343 to 354 (NKAAQAGSAKGK) show a composition bias toward low complexity. An N6-acetyllysine modification is found at Lys-360. Position 362 is a phosphothreonine (Thr-362). Residue Ser-366 is modified to Phosphoserine. Positions 381-391 (RAREETDKEPP) are enriched in basic and acidic residues.

In terms of assembly, interacts with DDX15. May interact with RUFY1. Post-translationally, phosphorylated in the C-terminal part of the protein.

Its subcellular location is the nucleus. Its function is as follows. Binds to the 3' poly(U) terminus of nascent RNA polymerase III transcripts, protecting them from exonuclease digestion and facilitating their folding and maturation. The polypeptide is Lupus La protein homolog (SSB) (Bos taurus (Bovine)).